A 449-amino-acid polypeptide reads, in one-letter code: UDP-N-acetylmuramoylalanine--D-glutamate ligase (449 aa).

116–122 provides a ligand contact to ATP; it reads GSNGKST.

The protein belongs to the MurCDEF family.

It localises to the cytoplasm. The catalysed reaction is UDP-N-acetyl-alpha-D-muramoyl-L-alanine + D-glutamate + ATP = UDP-N-acetyl-alpha-D-muramoyl-L-alanyl-D-glutamate + ADP + phosphate + H(+). The protein operates within cell wall biogenesis; peptidoglycan biosynthesis. Its function is as follows. Cell wall formation. Catalyzes the addition of glutamate to the nucleotide precursor UDP-N-acetylmuramoyl-L-alanine (UMA). In Shewanella violacea (strain JCM 10179 / CIP 106290 / LMG 19151 / DSS12), this protein is UDP-N-acetylmuramoylalanine--D-glutamate ligase.